A 445-amino-acid polypeptide reads, in one-letter code: Trigger factor (445 aa).

The PPIase FKBP-type domain maps to 162-247 (GDQVTIDAIG…IKAVHTAEPT (86 aa)).

The protein belongs to the FKBP-type PPIase family. Tig subfamily.

It localises to the cytoplasm. The catalysed reaction is [protein]-peptidylproline (omega=180) = [protein]-peptidylproline (omega=0). Functionally, involved in protein export. Acts as a chaperone by maintaining the newly synthesized protein in an open conformation. Functions as a peptidyl-prolyl cis-trans isomerase. In Rickettsia africae (strain ESF-5), this protein is Trigger factor.